Reading from the N-terminus, the 680-residue chain is Dihydroxyacetone phosphate acyltransferase (680 aa).

Residues Ser-12 and Ser-17 each carry the phosphoserine modification. Residues 162–167 (HRSYID) carry the HXXXXD motif motif. An N6-acetyllysine modification is found at Lys-643. The Microbody targeting signal motif lies at 678 to 680 (AKL).

Belongs to the GPAT/DAPAT family. As to quaternary structure, part of a heterotrimeric complex composed of GNPAT, AGPS and a modified form of GNPAT.

It is found in the peroxisome membrane. It carries out the reaction dihydroxyacetone phosphate + an acyl-CoA = a 1-acylglycerone 3-phosphate + CoA. The catalysed reaction is dihydroxyacetone phosphate + hexadecanoyl-CoA = 1-hexadecanoylglycerone 3-phosphate + CoA. It participates in membrane lipid metabolism; glycerophospholipid metabolism. In terms of biological role, dihydroxyacetonephosphate acyltransferase catalyzing the first step in the biosynthesis of plasmalogens, a subset of phospholipids that differ from other glycerolipids by having an alkyl chain attached through a vinyl ether linkage at the sn-1 position of the glycerol backbone, and which unique physical properties have an impact on various aspects of cell signaling and membrane biology. This chain is Dihydroxyacetone phosphate acyltransferase, found in Bos taurus (Bovine).